The following is a 531-amino-acid chain: Unconventional prefoldin RPB5 interactor (531 aa).

Position 1 is an N-acetylmethionine (methionine 1). Disordered regions lie at residues methionine 1–arginine 24, glutamate 224–alanine 381, lysine 408–serine 470, and threonine 500–serine 531. Low complexity predominate over residues proline 13 to arginine 24. 2 stretches are compositionally biased toward polar residues: residues serine 257–serine 266 and glycine 280–histidine 296. Acidic residues predominate over residues aspartate 300 to glutamate 319. At serine 369 the chain carries Phosphoserine; by RPS6KB1. A compositionally biased stretch (polar residues) spans asparagine 414–serine 424. The residue at position 439 (serine 439) is a Phosphoserine.

This sequence belongs to the RNA polymerase II subunit 5-mediating protein family. In terms of assembly, homodimer. Component of the PAQosome complex which is responsible for the biogenesis of several protein complexes and which consists of R2TP complex members RUVBL1, RUVBL2, RPAP3 and PIH1D1, URI complex members PFDN2, PFDN6, PDRG1, UXT and URI1 as well as ASDURF, POLR2E and DNAAF10/WDR92. Interacts with POLR2E/RPB5, RUVBL2 and RUVBL1. Interacts with PFDN2, PFDN4 and STAP1; the interactions are phosphorylation-dependent and occur in a growth-dependent manner in the mitochondrion. Interacts with UXT. Interacts with PPP1CC; the interaction is phosphorylation-dependent and occurs in a growth factor-dependent manner. Interacts (via the middle C-terminal region) with GTF2F1 and GTF2F2. Interacts with DMAP1. Interacts with TSC1 and TSC2. Interacts with PRPF8 and EFTUD2 in a ZNHIT2-dependent manner. In terms of processing, phosphorylation occurs in response to androgen treatment in prostate cancer cells in a mTOR-dependent manner. Phosphorylated; hyperhosphorylated in mitochondria in a mTORC-dependent signaling pathway. Phosphorylated at Ser-369 by RPS6KB1 in a growth factor- and rapamycin-dependent manner. S6K1-mediated mitochondrial phosphorylation at Ser-369 disrupts the URI1-PPP1CC complex in the mitochondrion, relieves PPP1CC phosphatase inhibition activity and hence engages a negative feedback diminishing RPS6KB1 kinase activity, preventing sustained S6K1-dependent signaling. Phosphorylated. Phosphorylation occurs essentially on serine residues. As to expression, expressed in the spinal cord, ganglia, choroid plexus and olfactors epithelium of the developing brain. Expressed in skin, lung, kidney, testis and muscles (at protein level). Expressed strongly in brain and kidney. Expressed weakly in skeletal muscle, lung and liver.

Its subcellular location is the nucleus. The protein localises to the cytoplasm. It is found in the mitochondrion. It localises to the cell projection. The protein resides in the dendrite. Its function is as follows. Involved in gene transcription regulation. Acts as a transcriptional repressor in concert with the corepressor UXT to regulate androgen receptor (AR) transcription. May act as a tumor suppressor to repress AR-mediated gene transcription and to inhibit anchorage-independent growth in prostate cancer cells. Required for cell survival in ovarian cancer cells. Together with UXT, associates with chromatin to the NKX3-1 promoter region. Functionally, plays a central role in maintaining S6K1 signaling and BAD phosphorylation under normal growth conditions thereby protecting cells from potential deleterious effects of sustained S6K1 signaling. The URI1-PPP1CC complex acts as a central component of a negative feedback mechanism that counteracts excessive S6K1 survival signaling to BAD in response to growth factors. Mediates inhibition of PPP1CC phosphatase activity in mitochondria. Coordinates the regulation of nutrient-sensitive gene expression availability in a mTOR-dependent manner. Seems to be a scaffolding protein able to assemble a prefoldin-like complex that contains PFDs and proteins with roles in transcription and ubiquitination. This is Unconventional prefoldin RPB5 interactor (Uri1) from Mus musculus (Mouse).